A 31-amino-acid chain; its full sequence is MSSVTLRNVSKAYGETIISKNINLEIQEGEF.

Belongs to the ABC transporter superfamily. Maltooligosaccharide importer (TC 3.A.1.1.1) family. As to quaternary structure, the complex is composed of two ATP-binding proteins (MalK), two transmembrane proteins (MalG and MalK) and a solute-binding protein (MalE).

The protein localises to the cell inner membrane. The catalysed reaction is D-maltose(out) + ATP + H2O = D-maltose(in) + ADP + phosphate + H(+). Part of the ABC transporter complex MalEFGK involved in maltose/maltodextrin import. Responsible for energy coupling to the transport system. The polypeptide is Maltose/maltodextrin import ATP-binding protein MalK (Photorhabdus luminescens (Xenorhabdus luminescens)).